Consider the following 154-residue polypeptide: Small ribosomal subunit protein uS15 (154 aa).

Residues 1 to 14 are compositionally biased toward basic residues; it reads MAPVPHRSRHKKGR. The tract at residues 1-24 is disordered; the sequence is MAPVPHRSRHKKGRSGSVRPAHPT.

It belongs to the universal ribosomal protein uS15 family. In terms of assembly, part of the 30S ribosomal subunit.

In Pyrobaculum arsenaticum (strain DSM 13514 / JCM 11321 / PZ6), this protein is Small ribosomal subunit protein uS15.